Consider the following 316-residue polypeptide: Protoheme IX farnesyltransferase (316 aa).

The next 9 helical transmembrane spans lie at 32-52, 53-73, 98-118, 120-140, 153-173, 180-200, 226-246, 251-271, and 280-300; these read VMSL…THVN, PIIG…SGAL, VARE…VITL, FVAN…YVVI, IVIG…AVAG, LALF…LALV, ILLY…IGFA, GLLS…VYLA, and VAMR…AAIV.

The protein belongs to the UbiA prenyltransferase family. Protoheme IX farnesyltransferase subfamily.

It is found in the cell inner membrane. It carries out the reaction heme b + (2E,6E)-farnesyl diphosphate + H2O = Fe(II)-heme o + diphosphate. The protein operates within porphyrin-containing compound metabolism; heme O biosynthesis; heme O from protoheme: step 1/1. Its function is as follows. Converts heme B (protoheme IX) to heme O by substitution of the vinyl group on carbon 2 of heme B porphyrin ring with a hydroxyethyl farnesyl side group. The protein is Protoheme IX farnesyltransferase of Methylocella silvestris (strain DSM 15510 / CIP 108128 / LMG 27833 / NCIMB 13906 / BL2).